The sequence spans 322 residues: CXXC-type zinc finger protein 5 (322 aa).

The segment covering 1–10 has biased composition (gly residues); the sequence is MSSLGGGSQD. Residues 1 to 100 form a disordered region; it reads MSSLGGGSQD…SGGGSMMGGE (100 aa). Composition is skewed to low complexity over residues 11–20 and 28–52; these read AGGSSSSSTN and SGPK…VADD. Thr-53 is modified (phosphothreonine). The span at 87–97 shows a compositional bias: gly residues; that stretch reads SSGGSGGGSMM. The segment at 256–297 adopts a CXXC-type zinc-finger fold; it reads GKKKRKRCGMCAPCRRRINCEQCSSCRNRKTGHQICKFRKCE. The short motif at 257–262 is the Nuclear localization signal element; that stretch reads KKKRKR. Residues Cys-263, Cys-266, Cys-269, Cys-275, Cys-278, Cys-281, Cys-291, and Cys-296 each coordinate Zn(2+).

Interacts with DVL1. Interacts with RBPJ.

Its subcellular location is the nucleus. The protein resides in the cytoplasm. May indirectly participate in activation of the NF-kappa-B and MAPK pathways. Acts as a mediator of BMP4-mediated modulation of canonical Wnt signaling activity in neural stem cells. Required for DNA damage-induced ATM phosphorylation, p53 activation and cell cycle arrest. Involved in myelopoiesis. Transcription factor. Binds to the oxygen responsive element of COX4I2 and represses its transcription under hypoxia conditions (4% oxygen), as well as normoxia conditions (20% oxygen). May repress COX4I2 transactivation induced by CHCHD2 and RBPJ. Binds preferentially to DNA containing cytidine-phosphate-guanosine (CpG) dinucleotides over CpH (H=A, T, and C), hemimethylated-CpG and hemimethylated-hydroxymethyl-CpG. The sequence is that of CXXC-type zinc finger protein 5 (CXXC5) from Homo sapiens (Human).